We begin with the raw amino-acid sequence, 346 residues long: Ly6/PLAUR domain-containing protein 3 (346 aa).

An N-terminal signal peptide occupies residues M1 to A30. UPAR/Ly6 domains follow at residues C33–P126 and C140–N222. N-linked (GlcNAc...) asparagine glycosylation is found at N118, N163, N176, and N183. The segment at P233–K324 is disordered. The span at R234–P246 shows a compositional bias: pro residues. A compositionally biased stretch (low complexity) spans T247–T269. Residues G283 to R295 are compositionally biased toward basic and acidic residues. C326 is lipidated: GPI-anchor amidated cysteine. A propeptide spans V327–L346 (removed in mature form).

Binds laminin-1 and laminin-5. Interacts with LGALS3. Interacts with AGR2 and AGR3. In terms of processing, N-glycosylated and O-glycosylated. In terms of tissue distribution, expressed in placenta, skin and urothelium. Found in suprabasal keratinocytes of chronic wounds. Weak expression is found in esophagus and peripheral blood mononuclear cells. Found in the majority of primary and metastatic transitional cell carcinomas (TCCs) and as well in breast cancer tissues, but not in adjacent normal tissues. High expression is found in the tumor component of some noninvasive superficial lesions and in invasive and metastatic urothelial cancers.

It localises to the cell membrane. Its function is as follows. Supports cell migration. May be involved in urothelial cell-matrix interactions. May be involved in tumor progression. In Homo sapiens (Human), this protein is Ly6/PLAUR domain-containing protein 3 (LYPD3).